We begin with the raw amino-acid sequence, 404 residues long: Tryptophan synthase beta chain (404 aa).

Residue lysine 98 is modified to N6-(pyridoxal phosphate)lysine.

The protein belongs to the TrpB family. In terms of assembly, tetramer of two alpha and two beta chains. It depends on pyridoxal 5'-phosphate as a cofactor.

The catalysed reaction is (1S,2R)-1-C-(indol-3-yl)glycerol 3-phosphate + L-serine = D-glyceraldehyde 3-phosphate + L-tryptophan + H2O. It participates in amino-acid biosynthesis; L-tryptophan biosynthesis; L-tryptophan from chorismate: step 5/5. In terms of biological role, the beta subunit is responsible for the synthesis of L-tryptophan from indole and L-serine. This is Tryptophan synthase beta chain from Rhodopseudomonas palustris (strain BisB18).